The chain runs to 291 residues: Popeye domain-containing protein 3 (291 aa).

N-linked (GlcNAc...) asparagine glycosylation is present at Asn-4. The next 3 helical transmembrane spans lie at 27–44 (GAIY…FMGG), 48–70 (FGLL…WAWV), and 77–99 (IFSW…AYQV).

This sequence belongs to the popeye family. Expressed predominantly in skeletal muscle (at protein level). Also detected in heart.

The protein localises to the membrane. Functionally, may play a role in the maintenance of heart function mediated, at least in part, through cAMP-binding. May play a role in the regulation of KCNK2/TREK-1-mediated current amplitude. This chain is Popeye domain-containing protein 3 (POPDC3), found in Homo sapiens (Human).